Consider the following 427-residue polypeptide: 3-phosphoshikimate 1-carboxyvinyltransferase (427 aa).

Lys-22, Ser-23, and Arg-27 together coordinate 3-phosphoshikimate. Phosphoenolpyruvate is bound at residue Lys-22. The phosphoenolpyruvate site is built by Gly-96 and Arg-124. Residues Ser-169, Ser-170, Gln-171, Ser-197, Asp-313, Asn-336, and Lys-340 each coordinate 3-phosphoshikimate. Residue Gln-171 participates in phosphoenolpyruvate binding. The Proton acceptor role is filled by Asp-313. Arg-344, Arg-386, and Lys-411 together coordinate phosphoenolpyruvate.

Belongs to the EPSP synthase family. As to quaternary structure, monomer.

The protein resides in the cytoplasm. It catalyses the reaction 3-phosphoshikimate + phosphoenolpyruvate = 5-O-(1-carboxyvinyl)-3-phosphoshikimate + phosphate. It functions in the pathway metabolic intermediate biosynthesis; chorismate biosynthesis; chorismate from D-erythrose 4-phosphate and phosphoenolpyruvate: step 6/7. Functionally, catalyzes the transfer of the enolpyruvyl moiety of phosphoenolpyruvate (PEP) to the 5-hydroxyl of shikimate-3-phosphate (S3P) to produce enolpyruvyl shikimate-3-phosphate and inorganic phosphate. The chain is 3-phosphoshikimate 1-carboxyvinyltransferase from Salmonella paratyphi A (strain ATCC 9150 / SARB42).